The chain runs to 316 residues: Pantothenate kinase (316 aa).

95-102 provides a ligand contact to ATP; sequence GSVAVGKS.

The protein belongs to the prokaryotic pantothenate kinase family.

It localises to the cytoplasm. It catalyses the reaction (R)-pantothenate + ATP = (R)-4'-phosphopantothenate + ADP + H(+). Its pathway is cofactor biosynthesis; coenzyme A biosynthesis; CoA from (R)-pantothenate: step 1/5. The chain is Pantothenate kinase (coaA) from Halalkalibacterium halodurans (strain ATCC BAA-125 / DSM 18197 / FERM 7344 / JCM 9153 / C-125) (Bacillus halodurans).